The following is a 134-amino-acid chain: uncharacterized protein (134 aa).

This is an uncharacterized protein from Human cytomegalovirus (strain AD169) (HHV-5).